Consider the following 424-residue polypeptide: Histidine--tRNA ligase (424 aa).

Belongs to the class-II aminoacyl-tRNA synthetase family. In terms of assembly, homodimer.

The protein resides in the cytoplasm. The enzyme catalyses tRNA(His) + L-histidine + ATP = L-histidyl-tRNA(His) + AMP + diphosphate + H(+). This Bacillus velezensis (strain DSM 23117 / BGSC 10A6 / LMG 26770 / FZB42) (Bacillus amyloliquefaciens subsp. plantarum) protein is Histidine--tRNA ligase.